The chain runs to 598 residues: Major royal jelly protein 5 (598 aa).

The first 17 residues, 1-17, serve as a signal peptide directing secretion; it reads MTTWLLLVVCLGIACQG. N-linked (GlcNAc...) asparagine glycans are attached at residues Asn-148, Asn-164, Asn-181, and Asn-324.

The protein belongs to the major royal jelly protein family. Found in and secreted from the hypopharyngeal glands of the worker honey bee (at protein level); expression peaks at 8 days post eclosion. Expressed in the brains of adult worker bees peaking at 12 days post eclosion (at protein level). Expressed in the spermatheca of adult queen bees (at protein level); Expression levels are higher in mated queens than in virgin queens. Expressed in the heads of worker bees after eclosion, expression dropping with age and detectable up to 26 days of age.

It localises to the secreted. Its function is as follows. Component of royal jelly, a substance produced in the hypopharyngeal gland containing proteins, free amino acids, fatty acids, sugars and other nutrients, which is fed to developing larvae by worker nurse bees. Major royal jelly proteins (MRJPs) are high in essential amino acids and probably have a nutritional function in larval food. All larvae are fed some royal jelly (also known as worker jelly) early in their development but it forms the principal source of nutrition for larvae destined to become queen bees. Produced in the spermatheca of adult queen bees, along with other major royal jelly proteins, where it may act as a nutrient supply for sperm stored by mated queens, or be involved in energy metabolism. In Apis mellifera (Honeybee), this protein is Major royal jelly protein 5.